Consider the following 686-residue polypeptide: ATP-dependent zinc metalloprotease FtsH 1 (686 aa).

Topologically, residues methionine 1 to arginine 33 are cytoplasmic. A helical membrane pass occupies residues serine 34–isoleucine 54. Residues lysine 55–tryptophan 164 lie on the Periplasmic side of the membrane. Residues valine 165–phenylalanine 185 form a helical membrane-spanning segment. Residues methionine 186 to glycine 686 lie on the Cytoplasmic side of the membrane. Glycine 257–threonine 264 contacts ATP. Histidine 479 lines the Zn(2+) pocket. Residue glutamate 480 is part of the active site. Histidine 483 and aspartate 555 together coordinate Zn(2+). Residues tyrosine 661–glycine 686 are disordered. The segment covering threonine 670–glycine 686 has biased composition (polar residues).

The protein in the central section; belongs to the AAA ATPase family. It in the C-terminal section; belongs to the peptidase M41 family. As to quaternary structure, homohexamer. It depends on Zn(2+) as a cofactor.

It localises to the cell inner membrane. Functionally, acts as a processive, ATP-dependent zinc metallopeptidase for both cytoplasmic and membrane proteins. Plays a role in the quality control of integral membrane proteins. This is ATP-dependent zinc metalloprotease FtsH 1 from Salinibacter ruber (strain M8).